A 2521-amino-acid polypeptide reads, in one-letter code: Piezo-type mechanosensitive ion channel component 1 (2521 aa).

Over 1–12 (MEPHVLGAVLYW) the chain is Cytoplasmic. A helical membrane pass occupies residues 13 to 25 (LLLPCALLAACLL). Over 26–28 (RFS) the chain is Extracellular. The helical transmembrane segment at 29–44 (GLSLVYLLFLLLLPWF) threads the bilayer. The Cytoplasmic portion of the chain corresponds to 45 to 58 (PGPTRCGLQGHTGR). A helical membrane pass occupies residues 59-81 (LLRALLGLSLLFLVAHLALQICL). The Extracellular segment spans residues 82-121 (HIVPRLDQLLGPSCSRWETLSRHIGVTRLDLKDIPNAIRL). The chain crosses the membrane as a helical span at residues 122–138 (VAPDLGILVVSSVCLGI). The Cytoplasmic segment spans residues 139-194 (CGRLARNTRQSPHPRELDDDERDVDASPTAGLQEAATLAPTRRSRLAARFRVTAHW). A helical transmembrane segment spans residues 195-214 (LLVAAGRVLAVTLLALAGIA). At 215 to 216 (HP) the chain is on the extracellular side. A helical transmembrane segment spans residues 217–236 (SALSSVYLLLFLALCTWWAC). Over 237–247 (HFPISTRGFSR) the chain is Cytoplasmic. The helical transmembrane segment at 248-268 (LCVAVGCFGAGHLICLYCYQM) threads the bilayer. Topologically, residues 269–309 (PLAQALLPPAGIWARVLGLKDFVGPTNCSSPHALVLNTGLD) are extracellular. Asn-295 carries N-linked (GlcNAc...) asparagine glycosylation. Residues 310-330 (WPVYASPGVLLLLCYATASLR) form a helical membrane-spanning segment. The Cytoplasmic portion of the chain corresponds to 331–417 (KLRAYRPSGQ…EASPLHSLGH (87 aa)). Residues 418-438 (LIMDQSYVCALIAMMVWSITY) traverse the membrane as a helical segment. The Extracellular segment spans residues 439-440 (HS). Residues 441 to 456 (WLTFVLLLWACLIWTV) form a helical membrane-spanning segment. The Cytoplasmic portion of the chain corresponds to 457–461 (RSRHQ). A helical membrane pass occupies residues 462 to 484 (LAMLCSPCILLYGMTLCCLRYVW). The Extracellular portion of the chain corresponds to 485 to 512 (AMDLRPELPTTLGPVSLRQLGLEHTRYP). A helical transmembrane segment spans residues 513–530 (CLDLGAMLLYTLTFWLLL). At 531 to 574 (RQFVKEKLLKWAESPAALTEVTVADTEPTRTQTLLQSLGELVKG) the chain is on the cytoplasmic side. The helical transmembrane segment at 575-595 (VYAKYWIYVCAGMFIVVSFAG) threads the bilayer. Arg-596 is a topological domain (extracellular). A helical transmembrane segment spans residues 597 to 617 (LVVYKIVYMFLFLLCLTLFQV). The Cytoplasmic portion of the chain corresponds to 618-627 (YYSLWRKLLK). The helical transmembrane segment at 628-649 (AFWWLVVAYTMLVLIAVYTFQF) threads the bilayer. Topologically, residues 650–679 (QDFPAYWRNLTGFTDEQLGDLGLEQFSVSE) are extracellular. Residues 680–696 (LFSSILVPGFFLLACIL) form a helical membrane-spanning segment. Residues 697–816 (QLHYFHRPFM…RRLLELHVFK (120 aa)) are Cytoplasmic-facing. Position 734 is a phosphothreonine (Thr-734). The disordered stretch occupies residues 738 to 769 (REEQQEHQQQQQEEEEEEEDSRDEGLGVATPH). Residues 749-759 (QEEEEEEEDSR) show a composition bias toward acidic residues. Phosphoserine is present on Ser-758. Residues 817–828 (LVALYTVWVALK) traverse the membrane as a helical segment. Topologically, residues 829–831 (EVS) are extracellular. The helical transmembrane segment at 832-845 (VMNLLLVVLWAFAL) threads the bilayer. Over 846–859 (PYPRFRPMASCLST) the chain is Cytoplasmic. Residues 860–874 (VWTCVIIVCKMLYQL) form a helical membrane-spanning segment. At 875–926 (KVVNPQEYSSNCTEPFPNSTNLLPTEISQSLLYRGPVDPANWFGVRKGFPNL) the chain is on the extracellular side. A helical transmembrane segment spans residues 927–954 (GYIQNHLQVLLLLVFEAIVYRRQEHYRR). The Cytoplasmic portion of the chain corresponds to 955-994 (QHQLAPLPAQAVFASGTRQQLDQDLLGCLKYFINFFFYKF). Residues 995–1010 (GLEICFLMAVNVIGQR) traverse the membrane as a helical segment. The Extracellular segment spans residues 1011 to 1012 (MN). Residues 1013–1028 (FLVTLHGCWLVAILTR) traverse the membrane as a helical segment. Residues 1029–1041 (RHRQAIARLWPNY) lie on the Cytoplasmic side of the membrane. Residues 1042 to 1057 (CLFLALFLLYQYLLCL) traverse the membrane as a helical segment. Topologically, residues 1058–1096 (GMPPALCIDYPWRWSRAVPMNSALIKWLYLPDFFRAPNS) are extracellular. The chain crosses the membrane as a helical span at residues 1097–1118 (TNLISDFLLLLCASQQWQVFSA). Topologically, residues 1119–1153 (ERTEEWQRMAGVNTDRLEPLRGEPNPVPNFIHCRS) are cytoplasmic. The helical transmembrane segment at 1154–1180 (YLDMLKVAVFRYLFWLVLVVVFVTGAT) threads the bilayer. Residues 1181 to 1185 (RISIF) lie on the Extracellular side of the membrane. Residues 1186 to 1204 (GLGYLLACFYLLLFGTALL) form a helical membrane-spanning segment. Topologically, residues 1205–1217 (QRDTRARLVLWDC) are cytoplasmic. The chain crosses the membrane as a helical span at residues 1218–1236 (LILYNVTVIISKNMLSLLA). At 1237–1285 (CVFVEQMQTGFCWVIQLFSLVCTVKGYYDPKEMMDRDQDCLLPVEEAGI) the chain is on the extracellular side. A helical transmembrane segment spans residues 1286 to 1302 (IWDSVCFFFLLLQRRVF). Residues 1303-1656 (LSHYYLHVRA…ELLLDRRLRI (354 aa)) are Cytoplasmic-facing. A coiled-coil region spans residues 1339 to 1368 (HRRIEEKSLAQLKRQMERIRAKQEKHRQGR). Disordered regions lie at residues 1356–1402 (RIRA…RRQW), 1462–1498 (RQQE…EAAA), and 1576–1630 (TLPG…DPGE). Over residues 1385-1398 (LEPGPDSPGGSSPP) the composition is skewed to low complexity. Phosphoserine is present on residues Ser-1391 and Ser-1396. Phosphoserine occurs at positions 1636 and 1646. A helical transmembrane segment spans residues 1657–1700 (PELEEAELFAEGQGRALRLLRAVYQCVAAHSELLCYFIIILNHM). Over 1701-1704 (VTAS) the chain is Extracellular. A helical transmembrane segment spans residues 1705–1720 (AGSLVLPVLVFLWAML). The Cytoplasmic portion of the chain corresponds to 1721–1728 (SIPRPSKR). A helical transmembrane segment spans residues 1729–1747 (FWMTAIVFTEIAVVVKYLF). Over 1748 to 1779 (QFGFFPWNSHVVLRRYENKPYFPPRILGLEKT) the chain is Extracellular. Residues 1780 to 1801 (DGYIKYDLVQLMALFFHRSQLL) form a helical membrane-spanning segment. At 1802-1960 (CYGLWDHEED…HTKYRAATDV (159 aa)) the chain is on the cytoplasmic side. A compositionally biased stretch (basic and acidic residues) spans 1811 to 1822 (DSPSKEHDKSGE). Residues 1811-1921 (DSPSKEHDKS…RPSRSGGRVR (111 aa)) are disordered. Thr-1854 is modified (phosphothreonine). Residues 1859-1868 (VELRPRDTRR) show a composition bias toward basic and acidic residues. A compositionally biased stretch (basic residues) spans 1869–1878 (ISLRFRRRKK). Acidic residues predominate over residues 1890–1903 (EAEDREEEEGEEEK). Basic and acidic residues predominate over residues 1904–1913 (EAPTGREKRP). The helical transmembrane segment at 1961 to 1980 (YALMFLADVVDFIIIIFGFW) threads the bilayer. The Extracellular segment spans residues 1981–2000 (AFGKHSAATDITSSLSDDQV). The helical transmembrane segment at 2001 to 2017 (PEAFLVMLLIQFSTMVV) threads the bilayer. The Cytoplasmic portion of the chain corresponds to 2018 to 2031 (DRALYLRKTVLGKL). Residues 2032-2052 (AFQVALVLAIHLWMFFILPAV) form a helical membrane-spanning segment. At 2053–2060 (TERMFNQN) the chain is on the extracellular side. A helical membrane pass occupies residues 2061-2076 (VVAQLWYFVKCIYFAL). Over 2077–2176 (SAYQIRCGYP…KKKIVKYGMG (100 aa)) the chain is Cytoplasmic. The helical transmembrane segment at 2177 to 2197 (GLIILFLIAIIWFPLLFMSLV) threads the bilayer. Topologically, residues 2198–2431 (RSVVGVVNQP…IFSDKVSPPS (234 aa)) are extracellular. N-linked (GlcNAc...) asparagine glycosylation is present at Asn-2294. An intrachain disulfide couples Cys-2411 to Cys-2415. The chain crosses the membrane as a helical span at residues 2432 to 2452 (LGFLAGYGIMGLYVSIVLVIG). The Cytoplasmic portion of the chain corresponds to 2453-2521 (KFVRGFFSEI…TMIKWTREKE (69 aa)).

This sequence belongs to the PIEZO (TC 1.A.75) family. In terms of assembly, homotrimer; the homotrimer forms a propeller-shaped Piezo channel with a cation-ion conducting pore. Heterotrimeric interaction may occur between PIEZO1 and PIEZO2. Interacts with PKD2. Interacts with STOML3. Interacts with TMC1, TMC2, PCDH15 and CIB2; the interaction may be part of the MET complex. Interacts with MDFIC (via C-terminus); the interaction prolongs Piezo channel inactivation. Interacts with MDFI (via C-terminus); the interaction prolongs Piezo channel inactivation. Expressed in numerous tissues. In normal brain, expressed exclusively in neurons, not in astrocytes. In Alzheimer disease brains, expressed in about half of the activated astrocytes located around classical senile plaques. In Parkinson disease substantia nigra, not detected in melanin-containing neurons nor in activated astrocytes. Expressed in erythrocytes (at protein level). Expressed in myoblasts (at protein level).

Its subcellular location is the endoplasmic reticulum membrane. The protein resides in the endoplasmic reticulum-Golgi intermediate compartment membrane. It is found in the cell membrane. The protein localises to the cell projection. It localises to the lamellipodium membrane. The catalysed reaction is K(+)(in) = K(+)(out). The enzyme catalyses Na(+)(in) = Na(+)(out). It catalyses the reaction Ca(2+)(in) = Ca(2+)(out). It carries out the reaction Mg(2+)(in) = Mg(2+)(out). Regulated by auxillary subunits MDFIC and MDFI. Down-regulated by phosphatidylserines exposed on the cell surface. Divalent ions decrease the single-channel permeability of K(+). In terms of biological role, pore-forming subunit of the mechanosensitive non-specific cation Piezo channel required for rapidly adapting mechanically activated (MA) currents and has a key role in sensing touch and tactile pain. Piezo channels are homotrimeric three-blade propeller-shaped structures that utilize a cap-motion and plug-and-latch mechanism to gate their ion-conducting pathways. Generates currents characterized by a linear current-voltage relationship that are sensitive to ruthenium red and gadolinium. Conductance to monovalent alkali ions is highest for K(+), intermediate for Na(+) and lowest for Li(+). Divalent ions except for Mn(2+) permeate the channel but more slowly than the monovalent ions and they also reduce K(+) currents. Plays a key role in epithelial cell adhesion by maintaining integrin activation through R-Ras recruitment to the ER, most probably in its activated state, and subsequent stimulation of calpain signaling. In inner ear hair cells, PIEZO1/2 subunits may constitute part of the mechanotransducer (MET) non-selective cation channel complex where they may act as pore-forming ion-conducting component in the complex. In the kidney, may contribute to the detection of intraluminal pressure changes and to urine flow sensing. Acts as a shear-stress sensor that promotes endothelial cell organization and alignment in the direction of blood flow through calpain activation. Plays a key role in blood vessel formation and vascular structure in both development and adult physiology. Acts as a sensor of phosphatidylserine (PS) flipping at the plasma membrane and governs morphogenesis of muscle cells. In myoblasts, flippase-mediated PS enrichment at the inner leaflet of plasma membrane triggers channel activation and Ca2+ influx followed by Rho GTPases signal transduction, leading to assembly of cortical actomyosin fibers and myotube formation. This is Piezo-type mechanosensitive ion channel component 1 from Homo sapiens (Human).